Reading from the N-terminus, the 118-residue chain is Large ribosomal subunit protein uL22 (118 aa).

It belongs to the universal ribosomal protein uL22 family. Part of the 50S ribosomal subunit.

In terms of biological role, this protein binds specifically to 23S rRNA; its binding is stimulated by other ribosomal proteins, e.g. L4, L17, and L20. It is important during the early stages of 50S assembly. It makes multiple contacts with different domains of the 23S rRNA in the assembled 50S subunit and ribosome. Its function is as follows. The globular domain of the protein is located near the polypeptide exit tunnel on the outside of the subunit, while an extended beta-hairpin is found that lines the wall of the exit tunnel in the center of the 70S ribosome. This Prosthecochloris aestuarii (strain DSM 271 / SK 413) protein is Large ribosomal subunit protein uL22.